The primary structure comprises 432 residues: MLTGVTDGIFCCLLGAPPNAVGPLESVESSDGYTFVEVKPGRVLRVKHAGPAPAPTPPPPLSDAAQGDQSGLVRCQRRITVYRNGRLLVENLGRAPRADLLHGQNGSGEPPAALEVELADPAGSDGRSVPGSAGSGSGGRRRRARRPKRTIHIDCEKRITSCKGAQADVVLFFIHGVGGSLAIWKEQLDFFVRLGYEVVAPDLAGHGASSAPQVAAAYTFYALAEDMRAIFKRYAKKRNVLIGHSYGVSFCTFLAHEYPDLVHKVIMINGGGPTALEPSLCSVFNMPTCVLHCLSPCLAWSFLKAGFARQGAKEKQLLKEGNAFNVSSFVLRAMMSGQYWPEGDEVYHAELTVPVLLVHGMHDKFVPVEEDQRMAEILLLAFLKLIDEGSHMVMLECPETVNTLLHEFLLWEPEPSPKALPEPLPAPPEEKK.

Disordered stretches follow at residues 47-69 (KHAG…QGDQ) and 121-149 (PAGS…RPKR). The span at 52–61 (APAPTPPPPL) shows a compositional bias: pro residues. The span at 139–149 (GRRRRARRPKR) shows a compositional bias: basic residues. Positions 170–272 (VLFFIHGVGG…HKVIMINGGG (103 aa)) constitute an AB hydrolase-1 domain. Catalysis depends on charge relay system residues serine 245, aspartate 363, and histidine 391.

It belongs to the AB hydrolase superfamily. In terms of assembly, interacts with NLRP3 (via NACHT and LLR domains); this interaction is enhanced in the presence of NLRP3 inflammasome inducers, such as ATP, nigericin, silica, or alum. Interacts with ZDHHC12.

It localises to the cytoplasm. Functionally, negatively regulates NLRP3-driven inflammation. Promotes NLRP3 degradation through the chaperone-mediated autophagy (CMA) pathway, hence attenuating inflammasome activation and IL1B secretion. Acts by recruiting palmitoyltransferase ZDHHC12 to NLRP3, facilitating NLRP3 palmitoylation and subsequent degradation. The polypeptide is Protein ABHD8 (Bos taurus (Bovine)).